The primary structure comprises 764 residues: Thyrotropin receptor (764 aa).

An N-terminal signal peptide occupies residues 1–21 (MSLTPLLQLALLLALPRSLRG). At 22–413 (KGCPSPPCEC…EFNPCEDIMG (392 aa)) the chain is on the extracellular side. The cysteines at positions 31 and 41 are disulfide-linked. N-linked (GlcNAc...) asparagine glycans are attached at residues N77 and N99. 6 LRR repeats span residues 125–150 (LPLL…VYST), 151–174 (DVFF…AFQG), 176–199 (CNET…AFNG), 201–223 (KLDA…AFGG), 225–248 (FSGP…GLEH), and 250–271 (KELI…SFLH). Residues N177 and N198 are each glycosylated (N-linked (GlcNAc...) asparagine). N302 is a glycosylation site (N-linked (GlcNAc...) asparagine). Y385 is modified (sulfotyrosine). A helical transmembrane segment spans residues 414-441 (YRFLRIVVWFVSLLALLGNVFVLVILLT). The Cytoplasmic portion of the chain corresponds to 442–450 (SHYKLTVPR). The chain crosses the membrane as a helical span at residues 451–473 (FLMCNLAFADFCMGMYLLLIASV). Over 474 to 494 (DLYTQSEYYNHAIDWQTGPGC) the chain is Extracellular. A disulfide bond links C494 and C569. Residues 495-517 (NTAGFFTVFASELSVYTLTVITL) traverse the membrane as a helical segment. Topologically, residues 518-537 (ERWYAITFAMRLDRKIRLRH) are cytoplasmic. Residues 538-560 (AYAIMAGGWVCCFLLALLPLVGI) traverse the membrane as a helical segment. The Extracellular portion of the chain corresponds to 561–580 (SSYAKVSICLPMDTETPLAL). Residues 581 to 602 (AYIILVLLLNIVAFTIVCSCYV) traverse the membrane as a helical segment. The Cytoplasmic segment spans residues 603 to 625 (KIYITVRNPQYNPGDKDTKIAKR). A helical membrane pass occupies residues 626–649 (MAVLIFTDFMCMAPISFYALSALM). Residues 650–660 (NKPLITVTNSK) lie on the Extracellular side of the membrane. Residues 661–682 (ILLVLFYPLNSCANPFLYAIFT) form a helical membrane-spanning segment. At 683–764 (KAFQRDVFIL…ISKEYKQPVL (82 aa)) the chain is on the cytoplasmic side. The PDZ-binding signature appears at 762 to 764 (PVL).

It belongs to the G-protein coupled receptor 1 family. FSH/LSH/TSH subfamily. Interacts with heterodimer GPHA2:GPHB5; this interaction stimulates cAMP production. Interacts (via the PDZ-binding motif) with SCRIB; regulates TSHR trafficking and function. In terms of processing, glycosylated. Post-translationally, sulfated. Sulfation on Tyr-385 plays a role in thyrotropin receptor binding and activation. Expressed in thyroide cells (at protein level).

The protein resides in the cell membrane. It is found in the basolateral cell membrane. Receptor for the thyroid-stimulating hormone (TSH) or thyrotropin. Also acts as a receptor for the heterodimeric glycoprotein hormone (GPHA2:GPHB5) or thyrostimulin. The activity of this receptor is mediated by G proteins which activate adenylate cyclase. Plays a central role in controlling thyroid cell metabolism. In Sus scrofa (Pig), this protein is Thyrotropin receptor (TSHR).